A 364-amino-acid chain; its full sequence is D-alanine--D-alanine ligase (364 aa).

The ATP-grasp domain occupies 134 to 344 (KVLLKSFNIP…YESLVDKLIT (211 aa)). 167–222 (NNKLNYPVIVKPSVLGSSIGINVAYNVSQIEKYIEEAFEYDLTVVVEKFIKAREIE) serves as a coordination point for ATP. Asp-297, Glu-311, and Asn-313 together coordinate Mg(2+).

Belongs to the D-alanine--D-alanine ligase family. Mg(2+) serves as cofactor. The cofactor is Mn(2+).

The protein localises to the cytoplasm. The catalysed reaction is 2 D-alanine + ATP = D-alanyl-D-alanine + ADP + phosphate + H(+). Its pathway is cell wall biogenesis; peptidoglycan biosynthesis. Its function is as follows. Cell wall formation. The protein is D-alanine--D-alanine ligase of Borrelia recurrentis (strain A1).